The chain runs to 714 residues: MGCNCTKGTRPDNDNVDNSNSIVSNVNVKERRSKPKKTPKKKKKSKSASSSKDNNVGFEERSNDNKEASLTLLIPIDAKKDDESEKKVNLERKSSRLVFQRRPTGIEVGANNIGTLQQPKMTRICSVSNGERGAQVMAGWPSWLASVAGEAINGWIPRKADSFEKLEKIGQGTYSSVYKARDLETNQLVALKKVRFANMDPDSVRFMAREIIILRRLDHPNVMKLEGLITSRVSGSMYLIFEYMEHDLAGLASTPGINFSEAQIKCYMKQLLHGLEHCHSRGVLHRDIKGSNLLLDHNNNLKIGDFGLANFYQGHQKQPLTSRVVTLWYRPPELLLGSTDYGVTVDLWSTGCILAELFTGKPIMPGRTEVEQLHKIFKLCGSPSEEYWKISKLPHATIFKPQQPYKRCVAETFKSLPSSALALVEVLLAVEPDARGTTASALESEFFTTSPLASDPSSLPKYQPRKEIDVKAQEEEAKRKKDTSSKQNDSKQVSRESKAVPAPDSNAESLTSIQKRQGQHNQVSNSDKFNPGEDAASFRIEPLKSGTAKDGHTRYGVSSVNRNGENVMMGSSRSPRKELRTQRSFVQRGTAQLSRFSNSVAARDGSHFAIANPRWFEDSYNNNNGRQNGGAWSQRLVVKHKEFTKHKESITVNGEKKERMHCSGPLVSAGGNLDEMLKEHERQIQLAVRKARVDKKTNRGDNRQTQAFLAANGR.

The disordered stretch occupies residues 1 to 64; that stretch reads MGCNCTKGTR…NVGFEERSND (64 aa). Gly2 is lipidated: N-myristoyl glycine. Positions 16-27 are enriched in low complexity; that stretch reads VDNSNSIVSNVN. Residues 31–46 show a composition bias toward basic residues; it reads RRSKPKKTPKKKKKSK. The Protein kinase domain occupies 163 to 447; the sequence is FEKLEKIGQG…TASALESEFF (285 aa). ATP contacts are provided by residues 169–177 and Lys192; that span reads IGQGTYSSV. The Proton acceptor role is filled by Asp287. Positions 471–498 are enriched in basic and acidic residues; the sequence is KAQEEEAKRKKDTSSKQNDSKQVSRESK. 2 disordered regions span residues 471–579 and 693–714; these read KAQE…RKEL and VDKKTNRGDNRQTQAFLAANGR. Polar residues-rich tracts occupy residues 506-528 and 556-573; these read NAESLTSIQKRQGQHNQVSNSDK and GVSSVNRNGENVMMGSSR.

The protein belongs to the protein kinase superfamily. Ser/Thr protein kinase family.

The sequence is that of Probable serine/threonine-protein kinase At1g09600 from Arabidopsis thaliana (Mouse-ear cress).